Here is a 505-residue protein sequence, read N- to C-terminus: Maturase K (505 aa).

The protein belongs to the intron maturase 2 family. MatK subfamily.

The protein resides in the plastid. It is found in the chloroplast. Usually encoded in the trnK tRNA gene intron. Probably assists in splicing its own and other chloroplast group II introns. This chain is Maturase K, found in Cubanola domingensis.